The primary structure comprises 311 residues: Porphobilinogen deaminase (311 aa).

Cysteine 245 carries the post-translational modification S-(dipyrrolylmethanemethyl)cysteine.

It belongs to the HMBS family. In terms of assembly, monomer. Requires dipyrromethane as cofactor.

It catalyses the reaction 4 porphobilinogen + H2O = hydroxymethylbilane + 4 NH4(+). It participates in porphyrin-containing compound metabolism; protoporphyrin-IX biosynthesis; coproporphyrinogen-III from 5-aminolevulinate: step 2/4. In terms of biological role, tetrapolymerization of the monopyrrole PBG into the hydroxymethylbilane pre-uroporphyrinogen in several discrete steps. The polypeptide is Porphobilinogen deaminase (Deinococcus deserti (strain DSM 17065 / CIP 109153 / LMG 22923 / VCD115)).